A 191-amino-acid chain; its full sequence is Transcription factor E (191 aa).

The region spanning 4 to 87 (RNKELLEIGR…YWHIETKRLP (84 aa)) is the HTH TFE/IIEalpha-type domain. A disordered region spans residues 170 to 191 (APPKKEKKGKKSKKRSKKSKKK). Residues 174-191 (KEKKGKKSKKRSKKSKKK) are compositionally biased toward basic residues.

Belongs to the TFE family. As to quaternary structure, monomer. Interaction with RNA polymerase subunits RpoF and RpoE is necessary for Tfe stimulatory transcription activity. Able to interact with Tbp and RNA polymerase in the absence of DNA promoter. Interacts both with the preinitiation and elongation complexes.

In terms of biological role, transcription factor that plays a role in the activation of archaeal genes transcribed by RNA polymerase. Facilitates transcription initiation by enhancing TATA-box recognition by TATA-box-binding protein (Tbp), and transcription factor B (Tfb) and RNA polymerase recruitment. Not absolutely required for transcription in vitro, but particularly important in cases where Tbp or Tfb function is not optimal. It dynamically alters the nucleic acid-binding properties of RNA polymerases by stabilizing the initiation complex and destabilizing elongation complexes. Seems to translocate with the RNA polymerase following initiation and acts by binding to the non template strand of the transcription bubble in elongation complexes. The sequence is that of Transcription factor E from Pyrococcus horikoshii (strain ATCC 700860 / DSM 12428 / JCM 9974 / NBRC 100139 / OT-3).